Consider the following 444-residue polypeptide: Maltoporin (444 aa).

Positions 1–24 are cleaved as a signal peptide; sequence MITLRKVPLALAIAAGILSAQAGA.

Belongs to the porin LamB (TC 1.B.3) family. As to quaternary structure, homotrimer formed of three 18-stranded antiparallel beta-barrels, containing three independent channels.

The protein localises to the cell outer membrane. It catalyses the reaction beta-maltose(in) = beta-maltose(out). Its function is as follows. Involved in the transport of maltose and maltodextrins. The chain is Maltoporin from Enterobacter sp. (strain 638).